Reading from the N-terminus, the 384-residue chain is Succinyl-diaminopimelate desuccinylase (384 aa).

Histidine 75 contributes to the Zn(2+) binding site. Residue aspartate 77 is part of the active site. Residue aspartate 108 participates in Zn(2+) binding. Glutamate 142 functions as the Proton acceptor in the catalytic mechanism. Zn(2+) is bound by residues glutamate 143, glutamate 171, and histidine 357.

The protein belongs to the peptidase M20A family. DapE subfamily. Homodimer. Zn(2+) is required as a cofactor. It depends on Co(2+) as a cofactor.

The enzyme catalyses N-succinyl-(2S,6S)-2,6-diaminopimelate + H2O = (2S,6S)-2,6-diaminopimelate + succinate. It functions in the pathway amino-acid biosynthesis; L-lysine biosynthesis via DAP pathway; LL-2,6-diaminopimelate from (S)-tetrahydrodipicolinate (succinylase route): step 3/3. Functionally, catalyzes the hydrolysis of N-succinyl-L,L-diaminopimelic acid (SDAP), forming succinate and LL-2,6-diaminopimelate (DAP), an intermediate involved in the bacterial biosynthesis of lysine and meso-diaminopimelic acid, an essential component of bacterial cell walls. In Shewanella oneidensis (strain ATCC 700550 / JCM 31522 / CIP 106686 / LMG 19005 / NCIMB 14063 / MR-1), this protein is Succinyl-diaminopimelate desuccinylase.